The sequence spans 263 residues: Leukocyte-associated immunoglobulin-like receptor 1 (263 aa).

Positions 1-21 are cleaved as a signal peptide; sequence MPLHSVIVLVLVLCLGWKSNT. The Ig-like C2-type domain maps to 27–112; the sequence is SDFTICAEPG…VWSQRSNDLQ (86 aa). Cysteine 49 and cysteine 96 are oxidised to a cystine. Residue asparagine 87 is glycosylated (N-linked (GlcNAc...) asparagine). The chain crosses the membrane as a helical span at residues 144-164; sequence ILTVVSVIFLLCLSLFLFCFL. 2 short sequence motifs (ITIM motif) span residues 225–230 and 255–260; these read VTYAQL and STYAAI. Residues tyrosine 227 and tyrosine 257 each carry the phosphotyrosine modification.

Interacts with SH2 domains of tyrosine-protein phosphatases PTPN6 and PTPN11. The interaction with PTPN6 is constitutive. Interacts with the SH2 domain of CSK. Binds with high affinity to extracellular matrix collagens, the interaction is functionally important. Phosphorylation at Tyr-227 and Tyr-257 activates it. May be phosphorylated by LCK. Post-translationally, N-glycosylated. As to expression, expressed in lymphoid and non-lymphoid organs.

The protein resides in the membrane. Its function is as follows. Functions as an inhibitory receptor that plays a constitutive negative regulatory role on cytolytic function of natural killer (NK) cells, B-cells and T-cells. Activation by Tyr phosphorylation results in recruitment and activation of the phosphatases PTPN6 and PTPN11. It also reduces the increase of intracellular calcium evoked by B-cell receptor ligation. May also play its inhibitory role independently of SH2-containing phosphatases. Modulates cytokine production in CD4+ T-cells, down-regulating IL2 and IFNG production while inducing secretion of transforming growth factor beta. Also down-regulates IgG and IgE production in B-cells as well as IL8, IL10 and TNF secretion. Inhibits proliferation and induces apoptosis in myeloid leukemia cell lines as well as prevents nuclear translocation of NF-kappa-B p65 subunit/RELA and phosphorylation of I-kappa-B alpha/CHUK in these cells. Inhibits the differentiation of peripheral blood precursors towards dendritic cells. The sequence is that of Leukocyte-associated immunoglobulin-like receptor 1 (Lair1) from Rattus norvegicus (Rat).